We begin with the raw amino-acid sequence, 54 residues long: Ribulose bisphosphate carboxylase large chain (54 aa).

Residues 1-2 (MS) constitute a propeptide that is removed on maturation. Proline 3 carries the N-acetylproline modification. Position 14 is an N6,N6,N6-trimethyllysine (lysine 14).

This sequence belongs to the RuBisCO large chain family. Type I subfamily. In terms of assembly, heterohexadecamer of 8 large chains and 8 small chains.

The protein resides in the plastid. It is found in the chloroplast. The enzyme catalyses 2 (2R)-3-phosphoglycerate + 2 H(+) = D-ribulose 1,5-bisphosphate + CO2 + H2O. It catalyses the reaction D-ribulose 1,5-bisphosphate + O2 = 2-phosphoglycolate + (2R)-3-phosphoglycerate + 2 H(+). In terms of biological role, ruBisCO catalyzes two reactions: the carboxylation of D-ribulose 1,5-bisphosphate, the primary event in carbon dioxide fixation, as well as the oxidative fragmentation of the pentose substrate in the photorespiration process. Both reactions occur simultaneously and in competition at the same active site. This is Ribulose bisphosphate carboxylase large chain (rbcL) from Icacina mannii.